Consider the following 347-residue polypeptide: MRIEEDLKLGFKEVLIRPKRSTLKSRSDVELERQFTFKHSGQSWSGVPIIAANMDTVGTFSMASALASFDILTAVHKHYSVEEWQAFINNSSADVLKHVMVSTGTSDADFEKTKQILDLNPALNFVCIDVANGYSEHFVQFVAKAREAWPTKTICAGNVVTGEMCEELILSGADIVKVGIGPGSVCTTRVKTGVGYPQLSAVIECADAAHGLGGMIVSDGGCTTPGDVAKAFGGGADFVMLGGMLAGHEESGGRIVEENGEKFMLFYGMSSESAMKRHVGGVAEYRAAEGKTVKLPLRGPVENTARDILGGLRSACTYVGASRLKELTKRTTFIRVQEQENRIFNNL.

An NADP(+)-binding site is contributed by 108-131; the sequence is ADFEKTKQILDLNPALNFVCIDVA. Residues glycine 181 and glycine 183 each coordinate K(+). Cysteine 186 serves as the catalytic Thioimidate intermediate. 216 to 239 is a binding site for NADP(+); sequence IVSDGGCTTPGDVAKAFGGGADFV.

This sequence belongs to the IMPDH/GMPR family. GuaC type 1 subfamily. As to quaternary structure, homotetramer.

It carries out the reaction IMP + NH4(+) + NADP(+) = GMP + NADPH + 2 H(+). In terms of biological role, catalyzes the irreversible NADPH-dependent deamination of GMP to IMP. It functions in the conversion of nucleobase, nucleoside and nucleotide derivatives of G to A nucleotides, and in maintaining the intracellular balance of A and G nucleotides. The protein is GMP reductase of Shigella dysenteriae serotype 1 (strain Sd197).